We begin with the raw amino-acid sequence, 462 residues long: uncharacterized protein (462 aa).

The region spanning 22–90 is the HTH gntR-type domain; that stretch reads KPIYKALAGQ…VGSGTFVSYD (69 aa). The segment at residues 50–69 is a DNA-binding region (H-T-H motif); the sequence is QRELADYLDLNVSTISKAFK. An N6-(pyridoxal phosphate)lysine modification is found at K308.

The protein in the C-terminal section; belongs to the class-I pyridoxal-phosphate-dependent aminotransferase family. Pyridoxal 5'-phosphate is required as a cofactor.

This is an uncharacterized protein from Bacillus subtilis (strain 168).